The chain runs to 389 residues: Transmembrane protease serine 11A (389 aa).

Over Met1–Ala23 the chain is Cytoplasmic. Residues Leu24–Ile44 form a helical; Signal-anchor for type II membrane protein membrane-spanning segment. Positions Val31 to Lys148 constitute an SEA domain. Residues Gln45 to Leu389 lie on the Extracellular side of the membrane. The Peptidase S1 domain maps to Ile158–Gly388. The cysteines at positions 183 and 199 are disulfide-linked. Residues His198 and Asp243 each act as charge relay system in the active site. The N-linked (GlcNAc...) asparagine glycan is linked to Asn274. 2 disulfide bridges follow: Cys308-Cys324 and Cys335-Cys364. Ser339 serves as the catalytic Charge relay system.

The protein belongs to the peptidase S1 family.

The protein resides in the membrane. Probable serine protease which may play a role in cellular senescence. Overexpression inhibits cell growth and induce G1 cell cycle arrest. The protein is Transmembrane protease serine 11A (Tmprss11a) of Mus musculus (Mouse).